The following is a 35-amino-acid chain: Ranatuerin-2SPb (35 aa).

Cysteine 28 and cysteine 33 are oxidised to a cystine.

Expressed by the skin glands.

It is found in the secreted. Antibacterial activity against Gram-positive bacterium S.aureus. Shows no detectable hemolytic activity towards human erythrocytes. In Lithobates septentrionalis (Mink frog), this protein is Ranatuerin-2SPb.